A 312-amino-acid polypeptide reads, in one-letter code: Malate dehydrogenase (312 aa).

NAD(+) is bound by residues 12 to 17 (GAGFTG) and D36. Positions 87 and 93 each coordinate substrate. NAD(+)-binding positions include N100 and 123 to 125 (LTN). N125 is a binding site for substrate. S149 is modified (phosphoserine). R156 contributes to the substrate binding site. H180 functions as the Proton acceptor in the catalytic mechanism.

This sequence belongs to the LDH/MDH superfamily. MDH type 3 family.

It carries out the reaction (S)-malate + NAD(+) = oxaloacetate + NADH + H(+). Its function is as follows. Catalyzes the reversible oxidation of malate to oxaloacetate. In Bacillus mycoides (strain KBAB4) (Bacillus weihenstephanensis), this protein is Malate dehydrogenase.